A 505-amino-acid chain; its full sequence is Tyrosine-protein kinase FRK (505 aa).

2 positions are modified to phosphoserine: Ser37 and Ser40. The SH3 domain maps to 42–110; that stretch reads RHGHYFVALF…PSNYVAEDRS (69 aa). The region spanning 116-208 is the SH2 domain; that stretch reads WFFGAIGRSD…GLCVKLGKPC (93 aa). Thr178 is subject to Phosphothreonine. The region spanning 234–491 is the Protein kinase domain; sequence IQLLKRLGSG…TLRWKLEDYF (258 aa). Residues 240 to 248 and Lys262 each bind ATP; that span reads LGSGQFGEV. Residue Asp354 is the Proton acceptor of the active site. Position 387 is a phosphotyrosine; by autocatalysis (Tyr387).

Belongs to the protein kinase superfamily. Tyr protein kinase family. SRC subfamily. In terms of assembly, interacts (via the SH3-domain) with PTEN. Interacts with RB1. As to expression, predominantly expressed in epithelial derived cell lines and tissues, especially normal liver, kidney, breast and colon.

It localises to the cytoplasm. Its subcellular location is the nucleus. The enzyme catalyses L-tyrosyl-[protein] + ATP = O-phospho-L-tyrosyl-[protein] + ADP + H(+). Its function is as follows. Non-receptor tyrosine-protein kinase that negatively regulates cell proliferation. Positively regulates PTEN protein stability through phosphorylation of PTEN on 'Tyr-336', which in turn prevents its ubiquitination and degradation, possibly by reducing its binding to NEDD4. May function as a tumor suppressor. The polypeptide is Tyrosine-protein kinase FRK (FRK) (Homo sapiens (Human)).